The primary structure comprises 764 residues: MTQTSERKSSAVEVEPGVFESVALIDNGSYGTRTVRFETGRLARQAAGSVVAYLDDETMLLSATTAGKTPKDQFDFFPLTVDVEERMYAAGRIPGSFFRREGRPSTDAILTCRLIDRPLRPSFVDGLRNEVQVVVTVLSLDPKDLYDVVAINAASASTQIAGLPFSGPVGGVRVALIPDQGANSAGGGQWVAFPTVEQLEGAVFDMVVAGRVVESGDVAIMMVEAEATEKVIELVEGGAQAPTEAVVAEGLEAAKPFIARLCRAQQDLAELAAKPTEEFPLFPPYGPDVYEAVEGAAEAELGEALSIAGKQEREEKIDEIKLAVLDRLAEQFAGREKELGAAFRSVTKKLVRQRILTDGFRIDGRGLADIRALSAEVAVVPRAHGSALFERGETQILGVTTLDMVKMAQQVDSLGPETSKRYMHHYNFPPFSTGETGRVGSPKRREIGHGALAERALIPVLPSQEDFPYAIRQVSEALGSNGSTSMGSVCASTLSLLNAGVPLKAPVAGIAMGLVSDTVTNDKGEQEVRYVALTDILGAEDAFGDMDFKVAGTREFVTALQLDTKLDGIPSQVLAGALSQAHDARTTILDVMAEAIATPDEMSPYAPRVTAIKIPVDKIGEVIGPKGKVINQITEDTGANISIEDDGTVFVGATDGPSAQAAIDAINAIANPQLPKVGERFLGTVVKTTAFGAFVSLLPGRDGLVHISKLGNGKRVAKVEDVVNVGDKLRVEIADIDNRGKISLVPVDENADEPAADAVDAGTE.

2 residues coordinate Mg(2+): aspartate 541 and aspartate 547. The KH domain maps to 607-666; sequence PRVTAIKIPVDKIGEVIGPKGKVINQITEDTGANISIEDDGTVFVGATDGPSAQAAIDAI. The S1 motif domain maps to 678-747; it reads GERFLGTVVK…NRGKISLVPV (70 aa).

It belongs to the polyribonucleotide nucleotidyltransferase family. The cofactor is Mg(2+).

Its subcellular location is the cytoplasm. It catalyses the reaction RNA(n+1) + phosphate = RNA(n) + a ribonucleoside 5'-diphosphate. Its function is as follows. Involved in mRNA degradation. Catalyzes the phosphorolysis of single-stranded polyribonucleotides processively in the 3'- to 5'-direction. The protein is Polyribonucleotide nucleotidyltransferase of Nocardia farcinica (strain IFM 10152).